The sequence spans 395 residues: MGATALRKVSIFGATGSIGQNTIDLIARDPDAYDVVALSGGANIAQLAADARRLRADVAVTAFPERLHDLRAALAGSGVEAAAGPAALVEAGARPADWVMSAIVGAAGLAPGLAALKQGATLALANKETLVCAGALVLETARRHGARLLPVDSEHSAVFQALVGEDMEAVERIVITASGGAFRDWPLERLASATAEQAAQHPNWDMGQRITIDSASMFNKALEVIETREFFGIDPDRIEVIVHPESMVHALVGFRDGALMAHLGAPDMRHAIGYALHWPERRDLPVARLDLAALGQLNFRAPDDARYPALRLARWVMARGGLSGAVFNAAKERALDHFIAGRIGFLDMAGLVEAVLDRFEADPGLIDAPMTLDTVTQTDHLARQRVDAAMAKRAG.

Thr15, Gly16, Ser17, Ile18, Gly41, Asn43, and Asn126 together coordinate NADPH. Lys127 contacts 1-deoxy-D-xylulose 5-phosphate. Glu128 provides a ligand contact to NADPH. Position 152 (Asp152) interacts with Mn(2+). 4 residues coordinate 1-deoxy-D-xylulose 5-phosphate: Ser153, Glu154, Ser178, and His201. Residue Glu154 coordinates Mn(2+). Residue Gly207 participates in NADPH binding. Residues Ser214, Asn219, Lys220, and Glu223 each contribute to the 1-deoxy-D-xylulose 5-phosphate site. Glu223 serves as a coordination point for Mn(2+).

Belongs to the DXR family. It depends on Mg(2+) as a cofactor. The cofactor is Mn(2+).

It carries out the reaction 2-C-methyl-D-erythritol 4-phosphate + NADP(+) = 1-deoxy-D-xylulose 5-phosphate + NADPH + H(+). Its pathway is isoprenoid biosynthesis; isopentenyl diphosphate biosynthesis via DXP pathway; isopentenyl diphosphate from 1-deoxy-D-xylulose 5-phosphate: step 1/6. Catalyzes the NADPH-dependent rearrangement and reduction of 1-deoxy-D-xylulose-5-phosphate (DXP) to 2-C-methyl-D-erythritol 4-phosphate (MEP). This is 1-deoxy-D-xylulose 5-phosphate reductoisomerase from Ruegeria pomeroyi (strain ATCC 700808 / DSM 15171 / DSS-3) (Silicibacter pomeroyi).